The chain runs to 1055 residues: cAMP and cAMP-inhibited cGMP 3',5'-cyclic phosphodiesterase 10A (1055 aa).

Disordered regions lie at residues 1-90 (MASL…RGGG), 151-193 (AAAA…GRRR), and 205-250 (LPAR…RPQG). 2 stretches are compositionally biased toward gly residues: residues 79-90 (GGPGALSARGGG) and 154-168 (AGGG…GGGQ). The span at 220–231 (PLGQAARRAGSP) shows a compositional bias: low complexity. Residues 232–243 (GFPGAGPGGGGQ) are compositionally biased toward gly residues. The residue at position 282 (Thr282) is a Phosphothreonine. 2 consecutive GAF domains span residues 367 to 510 (DNQL…SVAI) and 542 to 688 (AIDS…ALAL). Residues 562 to 563 (RC), 606 to 607 (IA), Thr640, Gln659, and His791 contribute to the 3',5'-cyclic AMP site. Residues 718-1035 (TSEEWQGLMQ…SQWEKVIRGE (318 aa)) enclose the PDEase domain. Residue His791 is the Proton donor of the active site. His791 provides a ligand contact to 3',5'-cyclic GMP. Residues His795, His829, Asp830, and Asp940 each coordinate a divalent metal cation. Gln992 is a 3',5'-cyclic AMP binding site. Gln992 serves as a coordination point for 3',5'-cyclic GMP.

This sequence belongs to the cyclic nucleotide phosphodiesterase family. Homodimer. It depends on a divalent metal cation as a cofactor. Phosphorylated on Thr-16. In terms of tissue distribution, abundant in the putamen and caudate nucleus regions of brain and testis, moderately expressed in the thyroid gland, pituitary gland, thalamus and cerebellum.

The protein localises to the cytoplasm. It is found in the cytosol. It carries out the reaction a nucleoside 3',5'-cyclic phosphate + H2O = a nucleoside 5'-phosphate + H(+). It catalyses the reaction 3',5'-cyclic AMP + H2O = AMP + H(+). The enzyme catalyses 3',5'-cyclic GMP + H2O = GMP + H(+). The protein operates within purine metabolism; 3',5'-cyclic AMP degradation; AMP from 3',5'-cyclic AMP: step 1/1. It functions in the pathway purine metabolism; 3',5'-cyclic GMP degradation; GMP from 3',5'-cyclic GMP: step 1/1. With respect to regulation, inhibited by dipyridamole and moderately by IBMX. cGMP acts as an allosteric activator. Plays a role in signal transduction by regulating the intracellular concentration of cyclic nucleotides. Can hydrolyze both cAMP and cGMP, but has higher affinity for cAMP and is more efficient with cAMP as substrate. May play a critical role in regulating cAMP and cGMP levels in the striatum, a region of the brain that contributes to the control of movement and cognition. The sequence is that of cAMP and cAMP-inhibited cGMP 3',5'-cyclic phosphodiesterase 10A (PDE10A) from Homo sapiens (Human).